The sequence spans 334 residues: N-acetyl-gamma-glutamyl-phosphate reductase (334 aa).

Cys-149 is a catalytic residue.

Belongs to the NAGSA dehydrogenase family. Type 1 subfamily.

Its subcellular location is the cytoplasm. It carries out the reaction N-acetyl-L-glutamate 5-semialdehyde + phosphate + NADP(+) = N-acetyl-L-glutamyl 5-phosphate + NADPH + H(+). The protein operates within amino-acid biosynthesis; L-arginine biosynthesis; N(2)-acetyl-L-ornithine from L-glutamate: step 3/4. In terms of biological role, catalyzes the NADPH-dependent reduction of N-acetyl-5-glutamyl phosphate to yield N-acetyl-L-glutamate 5-semialdehyde. This Sulfurimonas denitrificans (strain ATCC 33889 / DSM 1251) (Thiomicrospira denitrificans (strain ATCC 33889 / DSM 1251)) protein is N-acetyl-gamma-glutamyl-phosphate reductase.